The sequence spans 232 residues: Beta-casein (232 aa).

The signal sequence occupies residues 1–15 (MKLLILACFVALALA). Residue asparagine 22 is glycosylated (N-linked (GlcNAc...) asparagine). Phosphoserine is present on serine 24. Residue threonine 27 is modified to Phosphothreonine. Phosphoserine occurs at positions 30, 32, 33, and 34. The segment covering 48 to 63 (KLKREEQQQTENERQN) has biased composition (basic and acidic residues). The interval 48–74 (KLKREEQQQTENERQNKIHQFPQPQPL) is disordered.

Belongs to the beta-casein family. In terms of tissue distribution, mammary gland specific. Secreted in milk.

It is found in the secreted. Its function is as follows. Important role in determination of the surface properties of the casein micelles. In Sus scrofa (Pig), this protein is Beta-casein (CSN2).